Here is a 278-residue protein sequence, read N- to C-terminus: BPI fold-containing family A member 1 (278 aa).

An N-terminal signal peptide occupies residues Met1–Ala19. Repeat repeat units follow at residues Gly23–Leu28, Gln30–Leu36, Gly39–Leu44, and Gly47–Leu52. The tract at residues Gly23–Leu52 is 4 X 6 AA repeats of G-[LPQ]-[PL]-L-P-L. Residues Leu112 to Leu117 form an important for surfactant activity and antibacterial properties region. Residues Asn182 and Asn228 are each glycosylated (N-linked (GlcNAc...) asparagine). A disulfide bridge connects residues Cys204 and Cys246.

Belongs to the BPI/LBP/Plunc superfamily. Plunc family. In terms of assembly, monomer. Interacts (via N-terminus) with SCNN1B, a subunit of the heterotrimeric epithelial sodium channel (ENaC); this inhibits proteolytic activation of ENaC. As to expression, detected in airway epithelia (trachea and lung) and in bronchoalveolar fluid (at protein level). Upper airways, nasopharyngeal epithelium and thymus. Highest expression in the trachea and progressive decrease from proximal (bronchial) to distal (bronchiolar) airways. No expression is detected in the terminal bronchioles, respiratory bronchioles or lung alveoli.

The protein localises to the secreted. Its function is as follows. Lipid-binding protein which shows high specificity for the surfactant phospholipid dipalmitoylphosphatidylcholine (DPPC). Plays a role in the innate immune responses of the upper airways. Reduces the surface tension in secretions from airway epithelia and inhibits the formation of biofilm by pathogenic Gram-negative bacteria, such as P.aeruginosa and K.pneumoniae. Negatively regulates proteolytic cleavage of SCNN1G, an event that is required for activation of the epithelial sodium channel (ENaC), and thereby contributes to airway surface liquid homeostasis and proper clearance of mucus. Plays a role in the airway inflammatory response after exposure to irritants. May attract macrophages and neutrophils. This chain is BPI fold-containing family A member 1 (Bpifa1), found in Mus musculus (Mouse).